Consider the following 360-residue polypeptide: Actin-like protein MamK (360 aa).

Residues lysine 22, 33–34 (TS), and aspartate 89 each bind ATP. Position 156 (glutamate 156) interacts with Mg(2+). ATP is bound by residues 177 to 179 (AGT), 231 to 235 (KEQFS), and glycine 302.

It belongs to the FtsA/MreB family. MamK subfamily. In terms of assembly, forms cytoplasmic filaments. Interacts with MamJ. Forms filaments in the absence of other magnetosome proteins and in E.coli. Filament formation in vitro requires ATP, GTP or a non-hydrolyzable ATP analog.

The protein resides in the cytoplasm. The protein localises to the cytoskeleton. It catalyses the reaction ATP + H2O = ADP + phosphate + H(+). Filament dynamics depend partially on MamJ. Functionally, protein with ATPase activity which forms dynamic cytoplasmic filaments that are involved in sorting, concatenating and/or correctly positioning of magnetosomes in the cell. Not absolutely necessary for assembly of short chains. Filaments grow from the both cell poles towards midcell, and are probably disassembled at the other end of the cell, a process known as treadmilling. Polymerizes in the presence of ATP, GTP or a non-hydrolyzable ATP analog. Required for correct segregation and positioning of magnetosomes following cell division. The sequence is that of Actin-like protein MamK from Magnetospirillum gryphiswaldense (strain DSM 6361 / JCM 21280 / NBRC 15271 / MSR-1).